A 416-amino-acid chain; its full sequence is Transcription factor LATE FLOWERING (416 aa).

Low complexity-rich tracts occupy residues 176-186 (STTTTTTALPP) and 200-212 (TSPT…TSET). Disordered regions lie at residues 176–226 (STTT…AGGS) and 276–311 (LGGP…QTVA). Residues 303–316 (ISSDPQTVAARLRR) form a basic motif; degenerate region. The 50-residue stretch at 303 to 352 (ISSDPQTVAARLRRERVSERLRVLQRLVPGGSKMDTATMLDEAASYLKFL) folds into the bHLH domain. Residues 317-352 (ERVSERLRVLQRLVPGGSKMDTATMLDEAASYLKFL) form a helix-loop-helix motif region.

This sequence belongs to the bHLH protein family. Interacts with PIL13 and PIL15.

It localises to the nucleus. Functionally, transcription factor involved in the negative regulation of flowering. May be involved in the repression of the flowering factor GI and HD1 by interacting with PIL13 and PIL15 and competing with PRR1. Possesses transactivation activity in yeast. The polypeptide is Transcription factor LATE FLOWERING (Oryza sativa subsp. japonica (Rice)).